The following is a 212-amino-acid chain: Large ribosomal subunit protein uL3 (212 aa).

Residues 134–154 (RKTHGNSVSHRVPGSIGQNQT) form a disordered region. Glutamine 153 is subject to N5-methylglutamine.

This sequence belongs to the universal ribosomal protein uL3 family. In terms of assembly, part of the 50S ribosomal subunit. Forms a cluster with proteins L14 and L19. Post-translationally, methylated by PrmB.

Functionally, one of the primary rRNA binding proteins, it binds directly near the 3'-end of the 23S rRNA, where it nucleates assembly of the 50S subunit. The protein is Large ribosomal subunit protein uL3 of Dichelobacter nodosus (strain VCS1703A).